Here is a 269-residue protein sequence, read N- to C-terminus: MLPAPHTCCRLLQQLLACCLLLPRFLLTVLLLWLLDFPCVRRRVIRGAKEEDPGAPEREDPPLCVSDTNRMCTLESLKAVWYGQKLDFFKSAHLGGGAPNTEVVTLEGQRLCRILDFSKGHRPLVLNFGSCTUPPFMARLQAYQRLAAQRLDFADFLLVYIEEAHPCDGWLSTDAAYQIPTHQCLQDRLRAAQLMLQGAPGCRVVADTMTNASNAAYGAYFERLYVILDGKVVYQGGRGPEGYKIGELRNWLDQYQTRATGNGALVIQV.

The Cytoplasmic portion of the chain corresponds to 1 to 14; the sequence is MLPAPHTCCRLLQQ. The helical; Signal-anchor for type II membrane protein transmembrane segment at 15-35 threads the bilayer; sequence LLACCLLLPRFLLTVLLLWLL. At 36–269 the chain is on the extracellular side; that stretch reads DFPCVRRRVI…TGNGALVIQV (234 aa). Residue selenocysteine 133 is part of the active site. A non-standard amino acid (selenocysteine) is located at residue selenocysteine 133.

Belongs to the iodothyronine deiodinase family. Monomer. Homodimer. May undergo minor heretodimerization with DIO1 and DIO2.

The protein resides in the cell membrane. It localises to the endosome membrane. The enzyme catalyses 3,3',5'-triiodo-L-thyronine + iodide + A + H(+) = L-thyroxine + AH2. It catalyses the reaction 3,3'-diiodo-L-thyronine + iodide + A + H(+) = 3,3',5-triiodo-L-thyronine + AH2. The catalysed reaction is 3-iodo-L-thyronine + iodide + A + H(+) = 3,5-diiodo-L-thyronine + AH2. It carries out the reaction L-thyronine + iodide + A + H(+) = 3-iodo-L-thyronine + AH2. The enzyme catalyses 3',5'-diiodo-L-thyronine + iodide + A + H(+) = 3,3',5'-triiodo-L-thyronine + AH2. It catalyses the reaction 3'-iodo-L-thyronine + iodide + A + H(+) = 3,3'-diiodo-L-thyronine + AH2. The catalysed reaction is 3,3',5'-triiodothyronamine + iodide + A + H(+) = 3,3',5,5'-tetraiodothyronamine + AH2. It carries out the reaction 3',5'-diiodothyronamine + iodide + A + H(+) = 3,3',5'-triiodothyronamine + AH2. The enzyme catalyses 3,3'-diiodothyronamine + iodide + A + H(+) = 3,3',5-triiodothyronamine + AH2. It catalyses the reaction 3-iodothyronamine + iodide + A + H(+) = 3,5-diiodothyronamine + AH2. The catalysed reaction is 3'-iodothyronamine + iodide + A + H(+) = 3,3'-diiodothyronamine + AH2. It carries out the reaction thyronamine + iodide + A + H(+) = 3-iodothyronamine + AH2. Plays a crucial role in the metabolism of thyroid hormones (TH) and has specific roles in TH activation and inactivation by deiodination. Catalyzes the deiodination of L-thyroxine (T4) to 3,3',5'-triiodothyronine (rT3), 3,5-diiodothyronine (3,5-T2) to 3-monoiodothyronine (3-T1), rT3 to 3',5'-diiodothyronine (3',5'-T2) and 3,3'-diiodothyronine (3,3'-T2) to 3'-monoiodothyronine (3'-T1) via inner-ring deiodination (IRD). Catalyzes the deiodination of 3,5,3'-triiodothyronine (T3) to 3,3'-diiodothyronine (3,3'-T2) via IRD. Catalyzes the deiodination of 3-T1 to L-thyronine (T0) via outer-ring deiodination (ORD). Catalyzes the tyrosyl ring deiodinations of 3,3',5,5'-tetraiodothyronamine, 3,3',5'-triiodothyronamine, 3,5,3'-triiodothyronamine, 3,5-diiodothyronamine, 3,3'-diiodothyronamine and 3-iodothyronamine. The protein is Thyroxine 5-deiodinase (dio3) of Aquarana catesbeiana (American bullfrog).